The sequence spans 303 residues: Coenzyme PQQ synthesis protein B (303 aa).

Belongs to the PqqB family.

The protein operates within cofactor biosynthesis; pyrroloquinoline quinone biosynthesis. Functionally, may be involved in the transport of PQQ or its precursor to the periplasm. In Acinetobacter baumannii (strain ACICU), this protein is Coenzyme PQQ synthesis protein B.